The following is an 88-amino-acid chain: Large ribosomal subunit protein bL31B (88 aa).

The protein belongs to the bacterial ribosomal protein bL31 family. Type B subfamily. Part of the 50S ribosomal subunit.

This Herminiimonas arsenicoxydans protein is Large ribosomal subunit protein bL31B.